We begin with the raw amino-acid sequence, 185 residues long: Peptidyl-tRNA hydrolase (185 aa).

Tyr14 lines the tRNA pocket. Residue His19 is the Proton acceptor of the active site. TRNA contacts are provided by Phe64, Asn66, and Asn112.

This sequence belongs to the PTH family. As to quaternary structure, monomer.

The protein resides in the cytoplasm. It carries out the reaction an N-acyl-L-alpha-aminoacyl-tRNA + H2O = an N-acyl-L-amino acid + a tRNA + H(+). Its function is as follows. Hydrolyzes ribosome-free peptidyl-tRNAs (with 1 or more amino acids incorporated), which drop off the ribosome during protein synthesis, or as a result of ribosome stalling. In terms of biological role, catalyzes the release of premature peptidyl moieties from peptidyl-tRNA molecules trapped in stalled 50S ribosomal subunits, and thus maintains levels of free tRNAs and 50S ribosomes. The sequence is that of Peptidyl-tRNA hydrolase from Lacticaseibacillus paracasei (strain ATCC 334 / BCRC 17002 / CCUG 31169 / CIP 107868 / KCTC 3260 / NRRL B-441) (Lactobacillus paracasei).